We begin with the raw amino-acid sequence, 551 residues long: Calnexin homolog (551 aa).

Residues 1 to 26 (MVDRKEIPLAMGLLAVLLFFVASSSS) form the signal peptide. At 27 to 480 (FHLVRASDEV…EKGEKQPNLT (454 aa)) the chain is on the lumenal side. Residues serine 44 and aspartate 75 each coordinate Ca(2+). Cysteine 118 and cysteine 153 form a disulfide bridge. Tyrosine 122 and lysine 124 together coordinate an alpha-D-glucoside. Residue asparagine 140 is glycosylated (N-linked (GlcNAc...) asparagine). 2 residues coordinate an alpha-D-glucoside: tyrosine 144 and aspartate 151. A disordered region spans residues 226 to 330 (ALIPSKTIPD…CGEWKRPTKS (105 aa)). The segment at 233 to 364 (IPDPDDKKPE…QEIPNPEYFE (132 aa)) is p domain (Extended arm). 2 stretches are compositionally biased toward basic and acidic residues: residues 234–269 (PDPD…PREI) and 276–295 (KPEP…AKPE). Tandem repeats lie at residues 235 to 246 (DPDDKKPEDWDE), 252 to 263 (DPEAVKPEDWDE), 271 to 282 (DEEAEKPEPWLD), 289 to 299 (DPEAKPEDWDD), and 303 to 313 (GEWEAPKIENP). 4 X approximate repeats regions lie at residues 235–299 (DPDD…DWDD) and 303–360 (GEWE…IPNP). The span at 296 to 305 (DWDDEEDGEW) shows a compositional bias: acidic residues. An intrachain disulfide couples cysteine 315 to cysteine 321. Tandem repeats lie at residues 322–332 (GEWKRPTKSNP), 336–346 (GKWSAPYIDNP), and 350–360 (GIWKPQEIPNP). An alpha-D-glucoside is bound at residue glutamate 379. Residue aspartate 390 coordinates Ca(2+). Asparagine 478 carries N-linked (GlcNAc...) asparagine glycosylation. Residues 481–501 (IGIIVSVVIVFVSIFFRLIFG) traverse the membrane as a helical segment. Topologically, residues 502–551 (GKKPANVEANVEKKKTNTETTSKQDGGEKEDNKEKEETANPPRRRPKRDN) are cytoplasmic. A disordered region spans residues 510 to 551 (ANVEKKKTNTETTSKQDGGEKEDNKEKEETANPPRRRPKRDN). Positions 526-539 (DGGEKEDNKEKEET) are enriched in basic and acidic residues.

It belongs to the calreticulin family. In vegetative and flowering tissues.

It is found in the endoplasmic reticulum membrane. Calcium-binding protein that interacts with newly synthesized monoglucosylated glycoproteins in the endoplasmic reticulum. It may act in assisting protein assembly and/or in the retention within the ER of unassembled protein subunits. It seems to play a major role in the quality control apparatus of the ER by the retention of incorrectly folded proteins. This is Calnexin homolog from Pisum sativum (Garden pea).